A 55-amino-acid chain; its full sequence is Conotoxin Cal22c (55 aa).

Positions 1–5 (GRPSA) are excised as a propeptide.

Post-translationally, contains 4 disulfide bonds. In terms of tissue distribution, expressed by the venom duct.

The protein localises to the secreted. Probable neurotoxin with unknown target. Possibly targets ion channels. This Californiconus californicus (California cone) protein is Conotoxin Cal22c.